Here is a 238-residue protein sequence, read N- to C-terminus: Mannose-binding protein A (238 aa).

An N-terminal signal peptide occupies residues 1–17; sequence MLLLPLLVLLCVVSVSS. Residues 38 to 49 are compositionally biased toward basic and acidic residues; the sequence is DGRDGPKGEKGE. Residues 38–87 form a disordered region; sequence DGRDGPKGEKGEPGQGLRGLQGPPGKLGPPGSVGAPGSQGPKGQKGDRGD. Positions 39 to 88 constitute a Collagen-like domain; the sequence is GRDGPKGEKGEPGQGLRGLQGPPGKLGPPGSVGAPGSQGPKGQKGDRGDS. P43 is subject to 4-hydroxyproline. Residues K44 and K47 each carry the 5-hydroxylysine modification. 2 O-linked (Gal...) hydroxylysine glycosylation sites follow: K44 and K47. P50, P61, P67, P73, and P78 each carry 4-hydroxyproline. A 5-hydroxylysine mark is found at K79 and K82. 2 O-linked (Gal...) hydroxylysine glycosylation sites follow: K79 and K82. Positions 143–238 constitute a C-type lectin domain; it reads ALCSELRGTV…SHTAVCEFPA (96 aa). 2 disulfides stabilise this stretch: C145-C234 and C212-C226. D178, E182, E202, N204, D205, E210, D211, N222, and D223 together coordinate Ca(2+). The interval 202–210 is calcium-dependent carbohydrate binding; sequence EPNDHGSGE.

In terms of assembly, homotrimer. Forms higher oligomeric complexes formed by the association of two, three or more homotrimers. Oligomerization occurs in the endoplasmic reticulum. Interacts with MASP1 and MASP2. In terms of processing, hydroxylated on lysine and proline residues within the collagen-like domain. O-glycosylated. O-linked glycans on hydroxylysine residues consist of Glc-Gal disaccharides bound to the oxygen atom of post-translationally added hydroxyl groups. In terms of tissue distribution, detected in blood serum (at protein level).

It localises to the secreted. In terms of biological role, calcium-dependent lectin. Plays a role in the innate immune response by binding mannose, fucose and N-acetylglucosamine moieties on different microorganisms and mediating activation of the lectin complement pathway. Binds to late apoptotic cells, as well as to apoptotic blebs and to necrotic cells, but not to early apoptotic cells, facilitating their uptake by macrophages. This is Mannose-binding protein A (Mbl1) from Rattus norvegicus (Rat).